The sequence spans 94 residues: Small ribosomal subunit protein bS20 (94 aa).

It belongs to the bacterial ribosomal protein bS20 family.

Its function is as follows. Binds directly to 16S ribosomal RNA. In Symbiobacterium thermophilum (strain DSM 24528 / JCM 14929 / IAM 14863 / T), this protein is Small ribosomal subunit protein bS20.